The following is a 530-amino-acid chain: MNNARPIHRALLSVSDKTGIVEFAKALAERGVELLSTGGTARLLAEQGLTVTEVSDYTGFPEMMDGRVKTLHPKVHGGILGRRGQDDAVMNTHGIQPIDMVVVNLYPFAQTVANPNCTLADAVENIDIGGPTMVRSAAKNHKDVAIVVNAHDYDRVIREMDANHNSLTLATRFDLAIAAFEHTAAYDGMIANYFGTLVPSYGDNKEGDEESKFPRTFNAQFIKKQDMRYGENSHQAAAFYVEANPQEASVATARQIQGKALSYNNIADTDAALECVKEFSEPACVIVKHANPCGVALGDDLLQAYNRAYQTDPTSAFGGIIAFNRELDGETARAIIERQFVEVIIAPKVSQAAIDIVAAKQNVRLLECGEWQGQTTGFDLKRVNGGLLVQDRDQGMVAQDDLQVVSTRQPSDAELKDALFCWKVAKYVKSNAIVYAKGDMAIGIGAGQMSRVYSAKIAGIKAADEGLEVAGSVMASDAFFPFRDGIDAAAEAGITCVIQPGGSMRDQEVIDAANEHGMAMIFTGMRHFRH.

Residues 1-148 (MNNARPIHRA…KNHKDVAIVV (148 aa)) enclose the MGS-like domain.

The protein belongs to the PurH family.

It catalyses the reaction (6R)-10-formyltetrahydrofolate + 5-amino-1-(5-phospho-beta-D-ribosyl)imidazole-4-carboxamide = 5-formamido-1-(5-phospho-D-ribosyl)imidazole-4-carboxamide + (6S)-5,6,7,8-tetrahydrofolate. The enzyme catalyses IMP + H2O = 5-formamido-1-(5-phospho-D-ribosyl)imidazole-4-carboxamide. The protein operates within purine metabolism; IMP biosynthesis via de novo pathway; 5-formamido-1-(5-phospho-D-ribosyl)imidazole-4-carboxamide from 5-amino-1-(5-phospho-D-ribosyl)imidazole-4-carboxamide (10-formyl THF route): step 1/1. It participates in purine metabolism; IMP biosynthesis via de novo pathway; IMP from 5-formamido-1-(5-phospho-D-ribosyl)imidazole-4-carboxamide: step 1/1. This chain is Bifunctional purine biosynthesis protein PurH, found in Vibrio cholerae serotype O1 (strain ATCC 39541 / Classical Ogawa 395 / O395).